An 86-amino-acid chain; its full sequence is Weak neurotoxin 10 (86 aa).

The first 21 residues, 1–21 (MKTLLLTLVVVTIVCLDLGYT), serve as a signal peptide directing secretion. Cystine bridges form between cysteine 24/cysteine 45, cysteine 27/cysteine 32, cysteine 38/cysteine 63, cysteine 67/cysteine 78, and cysteine 79/cysteine 84.

It belongs to the three-finger toxin family. Ancestral subfamily. Orphan group II sub-subfamily. In terms of tissue distribution, expressed by the venom gland.

Its subcellular location is the secreted. Its function is as follows. Binds with low affinity to muscular (alpha-1-beta-1-delta-epsilon/CHRNA1-CHRNB1-CHRND-CHRNE) and very low affinity to neuronal (alpha-7/CHRNA7) nicotinic acetylcholine receptor (nAChR). This Naja sputatrix (Malayan spitting cobra) protein is Weak neurotoxin 10 (WNTX10).